The sequence spans 473 residues: ATP synthase subunit beta (473 aa).

153–160 (GGAGVGKT) is an ATP binding site.

Belongs to the ATPase alpha/beta chains family. In terms of assembly, F-type ATPases have 2 components, CF(1) - the catalytic core - and CF(0) - the membrane proton channel. CF(1) has five subunits: alpha(3), beta(3), gamma(1), delta(1), epsilon(1). CF(0) has three main subunits: a(1), b(2) and c(9-12). The alpha and beta chains form an alternating ring which encloses part of the gamma chain. CF(1) is attached to CF(0) by a central stalk formed by the gamma and epsilon chains, while a peripheral stalk is formed by the delta and b chains.

Its subcellular location is the cell inner membrane. It carries out the reaction ATP + H2O + 4 H(+)(in) = ADP + phosphate + 5 H(+)(out). Produces ATP from ADP in the presence of a proton gradient across the membrane. The catalytic sites are hosted primarily by the beta subunits. The polypeptide is ATP synthase subunit beta (Rickettsia conorii (strain ATCC VR-613 / Malish 7)).